Reading from the N-terminus, the 437-residue chain is Probable peptidoglycan-N-acetylglucosamine deacetylase ARB_03699 (437 aa).

Positions 1–20 (MLMRLYTFFAAALLACCAAA) are cleaved as a signal peptide. The segment at 47–132 (STRAATTTTT…STSAAAPSTP (86 aa)) is disordered. Residue Asn99 is glycosylated (N-linked (GlcNAc...) asparagine). The NodB homology domain maps to 149 to 334 (GTVAITFDDG…EVKRRGLKAV (186 aa)). The Proton acceptor role is filled by Asp156. Asp157, His209, and His213 together coordinate Zn(2+). Position 251 (Tyr251) interacts with substrate. His308 serves as the catalytic Proton donor. Residues 350–370 (TTPVQVPTGTSTTSPTATPTS) show a composition bias toward low complexity. Residues 350–384 (TTPVQVPTGTSTTSPTATPTSPGTPPPAPTQPGVA) are disordered. One can recognise a LysM domain in the interval 389–435 (KWHTVVSGDTCYDIAAANGISLDNLYKWNPAVGTSCASLWLGYAVCV).

Requires Zn(2+) as cofactor. Co(2+) is required as a cofactor.

It localises to the secreted. The enzyme catalyses peptidoglycan-N-acetyl-D-glucosamine + H2O = peptidoglycan-D-glucosamine + acetate.. Functionally, catalyzes the deacetylation of N-acetylglucosamine (GlcNAc) residues in peptidoglycan. This is Probable peptidoglycan-N-acetylglucosamine deacetylase ARB_03699 from Arthroderma benhamiae (strain ATCC MYA-4681 / CBS 112371) (Trichophyton mentagrophytes).